The following is a 775-amino-acid chain: Ubiquitin carboxyl-terminal hydrolase 14 (775 aa).

The segment at 1–108 (MSCPHLTETN…EDLYDYFYVP (108 aa)) adopts a UBP-type 1; degenerate zinc-finger fold. Positions 25, 28, 41, 44, 49, 56, 60, 66, 153, 155, 174, 177, 186, 189, 194, 207, 211, 217, 236, and 239 each coordinate Zn(2+). The segment at 151–259 (TTCDHIINLP…THMLNFGIDI (109 aa)) adopts a UBP-type 2 zinc-finger fold. Residues 300–774 (TGLKNLGNSC…TGYVYLFERL (475 aa)) form the USP domain. Cys309 acts as the Nucleophile in catalysis. Ser456 bears the Phosphoserine mark. UBA domains lie at 576 to 617 (EWNQ…LFEH) and 639 to 679 (SVSE…ILNH). His730 acts as the Proton acceptor in catalysis.

It belongs to the peptidase C19 family.

It carries out the reaction Thiol-dependent hydrolysis of ester, thioester, amide, peptide and isopeptide bonds formed by the C-terminal Gly of ubiquitin (a 76-residue protein attached to proteins as an intracellular targeting signal).. This Schizosaccharomyces pombe (strain 972 / ATCC 24843) (Fission yeast) protein is Ubiquitin carboxyl-terminal hydrolase 14 (ubp14).